We begin with the raw amino-acid sequence, 433 residues long: Protoheme IX farnesyltransferase 2 (433 aa).

Positions 1-164 (MQRFTGLVTA…LTKPRLMWLL (164 aa)) are unknown. 13 consecutive transmembrane segments (helical) span residues 4 to 24 (FTGL…LGVA), 35 to 55 (AVAH…AAAL), 67 to 87 (WGVT…MAVL), 95 to 115 (LHLF…TWHL), 160 to 180 (LMWL…VTGA), 184 to 204 (GVTI…AGTF), 236 to 256 (AFGV…VNPL), 257 to 277 (AAAL…VVLK), 282 to 304 (WNTV…AVAG), 308 to 330 (LPAL…NLAI), 357 to 377 (ILYW…VAGF), 378 to 398 (GPVY…TVVV), and 413 to 433 (HASN…TMVI). Residues 165-430 (CLLALSGMAL…ALLVAILVET (266 aa)) are protoheme IX prenyltransferase.

In the C-terminal section; belongs to the UbiA prenyltransferase family. Protoheme IX farnesyltransferase subfamily.

The protein localises to the cell membrane. It carries out the reaction heme b + (2E,6E)-farnesyl diphosphate + H2O = Fe(II)-heme o + diphosphate. The protein operates within porphyrin-containing compound metabolism; heme O biosynthesis; heme O from protoheme: step 1/1. Its function is as follows. Converts heme B (protoheme IX) to heme O by substitution of the vinyl group on carbon 2 of heme B porphyrin ring with a hydroxyethyl farnesyl side group. In Natronomonas pharaonis (strain ATCC 35678 / DSM 2160 / CIP 103997 / JCM 8858 / NBRC 14720 / NCIMB 2260 / Gabara) (Halobacterium pharaonis), this protein is Protoheme IX farnesyltransferase 2 (ctaB2).